We begin with the raw amino-acid sequence, 242 residues long: Ribosomal RNA small subunit methyltransferase G (242 aa).

S-adenosyl-L-methionine is bound by residues Gly-78, Phe-83, 129–130, and Arg-148; that span reads AE. The tract at residues 221–242 is disordered; the sequence is TKKRYPRKAGVPEKSPIGGKHD.

It belongs to the methyltransferase superfamily. RNA methyltransferase RsmG family.

It localises to the cytoplasm. Functionally, specifically methylates the N7 position of a guanine in 16S rRNA. This chain is Ribosomal RNA small subunit methyltransferase G, found in Oenococcus oeni (strain ATCC BAA-331 / PSU-1).